The sequence spans 662 residues: Probable quinol oxidase subunit 1 (662 aa).

2 helical membrane passes run 14–34 (WMIT…IAVI) and 58–78 (VMYL…ALLI). His-102 provides a ligand contact to Fe(II)-heme a. The next 8 helical transmembrane spans lie at 103-123 (GVIM…NIVV), 140-160 (VSFW…IIGG), 187-207 (IAIQ…FVTI), 228-248 (FITT…LALM), 273-293 (FFWV…FGIY), 311-331 (MVWA…HHFF), 336-356 (GALI…PTGV), and 376-396 (MLFS…GVML). 4 residues coordinate Cu cation: His-279, Tyr-283, His-328, and His-329. Residues 279 to 283 (HPEVY) constitute a cross-link (1'-histidyl-3'-tyrosine (His-Tyr)). His-414 lines the heme a3 pocket. The next 5 helical transmembrane spans lie at 415–435 (FHYT…IFWY), 451–471 (CFWF…ILGL), 493–513 (ISTI…VSIV), 587–604 (PVGF…FFLI), and 608–627 (VIPA…YRSF). Fe(II)-heme a is bound at residue His-416.

This sequence belongs to the heme-copper respiratory oxidase family. It depends on Cu cation as a cofactor. The cofactor is ferriheme a. Heme A3. serves as cofactor.

It is found in the cell membrane. The catalysed reaction is 2 a quinol + O2 = 2 a quinone + 2 H2O. It functions in the pathway energy metabolism; oxidative phosphorylation. Catalyzes quinol oxidation with the concomitant reduction of oxygen to water. The chain is Probable quinol oxidase subunit 1 (qoxB) from Staphylococcus aureus (strain COL).